We begin with the raw amino-acid sequence, 980 residues long: Thrombospondin-4 (980 aa).

The signal sequence occupies residues 1–42 (MTMITPSSKLTLTKGNKSWSSTRCGAFLLLHLVLQPWQRAGA). A Laminin G-like domain is found at 43–210 (QATPQVFDLL…LEELKLVVRG (168 aa)). The EGF-like 1 domain maps to 304-343 (PTRRCDSSPCFRGVRCTDTRDGFQCGPCPDGYTGNGITCS). Cystine bridges form between cysteine 308–cysteine 319, cysteine 313–cysteine 328, cysteine 331–cysteine 342, cysteine 348–cysteine 359, cysteine 353–cysteine 368, cysteine 371–cysteine 395, cysteine 401–cysteine 412, cysteine 406–cysteine 421, cysteine 424–cysteine 436, cysteine 442–cysteine 456, cysteine 450–cysteine 466, cysteine 468–cysteine 480, cysteine 496–cysteine 501, cysteine 506–cysteine 526, cysteine 542–cysteine 562, cysteine 565–cysteine 585, cysteine 601–cysteine 621, cysteine 624–cysteine 644, cysteine 662–cysteine 682, cysteine 702–cysteine 722, and cysteine 738–cysteine 959. Positions 344–381 (DVDECKYHPCYPGVRCTNLAPGFRCDACPVGFTGPMVQ) constitute an EGF-like 2; calcium-binding domain. The region spanning 397-434 (DVDECRNGACVLNSICINTLGSYRCGPCKPGYTGDQTR) is the EGF-like 3; calcium-binding domain. Positions 438-481 (TERSCRNPEQNPCSVHAQCIEERQGDVTCVCGVGWAGRAGYVCG) constitute an EGF-like 4 domain. 8 TSP type-3 repeats span residues 482–514 (KDVDIDSYPDEELPCSARNCKKDNCKYVPNSGQ), 515–550 (EDADRDGIGDACDEDADGDGILNEQDNCVLTHNVDQ), 551–573 (RNTDKDIFGDACDNCRGVLNNDQ), 574–609 (KDTDGDGKGDACDDDMDGDGIKNILDNCPRVPNRDQ), 610–632 (QDRDGDGVGDACDSCPDVSNPNQ), 633–670 (SDVDNDLVGDSCDTNQDSDGDGHQDSTDNCPTVINSAQ), 671–710 (LDTDKDGIGDECDDDDDNDGMPDLFPPGPDNCRLVPNPAQ), and 711–746 (EDSNNDGVGDICEADFDQDKVIDRIDVCPENAEITL). The interval 596–691 (NILDNCPRVP…CDDDDDNDGM (96 aa)) is disordered. The span at 605-615 (PNRDQQDRDGD) shows a compositional bias: basic and acidic residues. Asparagine 631 carries N-linked (GlcNAc...) asparagine glycosylation. Residues 659–671 (TDNCPTVINSAQL) show a composition bias toward polar residues. The segment covering 679–690 (GDECDDDDDNDG) has biased composition (acidic residues). In terms of domain architecture, TSP C-terminal spans 750–964 (RAYQTVVLDP…LKYRCNDTIP (215 aa)). Asparagine 960 carries N-linked (GlcNAc...) asparagine glycosylation.

Belongs to the thrombospondin family. Homopentamer; disulfide-linked. Interacts with PTBP3. Interacts (via EGF-like 3; calcium-binding domain) with ATF6 and facilitates its processing, activation and nuclear translocation. Interacts with NOTCH1. Mainly expressed in astrocytes, and in ressponse to peripheral nerve injury, significantly up-regulated in the dorsal spinal cord (at protein level).

It localises to the endoplasmic reticulum. The protein localises to the sarcoplasmic reticulum. It is found in the secreted. Its subcellular location is the extracellular space. The protein resides in the extracellular matrix. Its function is as follows. Adhesive glycoprotein that mediates cell-to-cell and cell-to-matrix interactions and is involved in various processes including cellular proliferation, migration, adhesion and attachment, inflammatory response to CNS injury, regulation of vascular inflammation and adaptive responses of the heart to pressure overload and in myocardial function and remodeling. Binds to structural extracellular matrix (ECM) proteins and modulates the ECM in response to tissue damage, contributing to cardioprotective and adaptive ECM remodeling. Plays a role in ER stress response, via its interaction with the activating transcription factor 6 alpha (ATF6) which produces adaptive ER stress response factors and protects myocardium from pressure overload. May contribute to spinal presynaptic hypersensitivity and neuropathic pain states after peripheral nerve injury. May play a role in regulating protective astrogenesis from the subventricular zone (SVZ) niche after injury in a NOTCH1-dependent manner. This chain is Thrombospondin-4 (Thbs4), found in Rattus norvegicus (Rat).